A 1140-amino-acid polypeptide reads, in one-letter code: Multiple epidermal growth factor-like domains protein 10 (1140 aa).

Positions 1-25 (MVISLNSCLSFICLLLCHWIGTASP) are cleaved as a signal peptide. The necessary for interaction with AP2M1, self-assembly and formation of the irregular, mosaic-like adhesion pattern stretch occupies residues 1-857 (MVISLNSCLS…ALPADSYQIG (857 aa)). Over 26–857 (LNLEDPNVCS…ALPADSYQIG (832 aa)) the chain is Extracellular. One can recognise an EMI domain in the interval 30–107 (DPNVCSHWES…FYESGEMCVP (78 aa)). 48 cysteine pairs are disulfide-bonded: C34–C95, C60–C69, C94–C105, C109–C118, C113–C124, C126–C135, C148–C160, C154–C167, C169–C178, C191–C203, C197–C210, C212–C221, C234–C246, C240–C253, C255–C264, C281–C289, C283–C296, C298–C307, C320–C332, C326–C339, C341–C350, C409–C421, C415–C428, C430–C439, C456–C464, C458–C471, C473–C482, C495–C507, C501–C514, C516–C525, C542–C550, C544–C557, C559–C568, C581–C593, C587–C600, C602–C611, C669–C681, C675–C688, C690–C699, C716–C724, C718–C731, C733–C742, C755–C767, C761–C774, C776–C785, C802–C810, C804–C817, and C819–C828. EGF-like domains lie at 106–136 (VPHC…TNCS), 144–179 (WGPH…WRCE), 187–222 (YGND…AFCE), 230–265 (HGPQ…TVCG), 278–308 (SQEC…ERCQ), 316–351 (YGVL…ERCE), 405–440 (YGEA…IDCS), 453–483 (SSRC…VDCS), 491–526 (WGFG…EKCE), 539–569 (AERC…VHCD), 577–612 (WGPN…TTCQ), 665–700 (FGKN…SDCS), 713–743 (IHTC…LYCT), 751–786 (YGKD…RHCE), and 799–829 (RQIC…ARCD). N134 carries an N-linked (GlcNAc...) asparagine glycan. Residue N496 is glycosylated (N-linked (GlcNAc...) asparagine). A helical transmembrane segment spans residues 858–878 (AIAGIIILVLVVLFLLALFII). The Cytoplasmic portion of the chain corresponds to 879–1140 (YRHKQKGKES…SSSNSSSSSE (262 aa)). Residues 945-1140 (RDRMTVTKSK…SSSNSSSSSE (196 aa)) form a necessary for formation of large intracellular vacuoles region. Y1030 is subject to Phosphotyrosine; by SRC. A disordered region spans residues 1111-1140 (YDLLPVRDSSSSPKQEDSGGSSSNSSSSSE). Low complexity predominate over residues 1128–1140 (SGGSSSNSSSSSE).

The protein belongs to the MEGF family. Homomer. Interacts with GULP1 and ABCA1. Interacts with AP2M1. Does not interact with MEGF11. Binds with high affinity to complement C1q. Interacts (via the cytoplasmic domain) with NOTCH1 (via NICD domain). In terms of processing, phosphorylated on tyrosine residues. Phosphorylation at Tyr-1030 may be important for muscle cell proliferation. Ubiquitinated; mono- and polyubiquitinated forms are detected. In terms of tissue distribution, expressed in muscle (at protein level).

Its subcellular location is the cell membrane. It is found in the cell projection. It localises to the phagocytic cup. In terms of biological role, membrane receptor involved in phagocytosis by macrophages and astrocytes of apoptotic cells. Receptor for C1q, an eat-me signal, that binds phosphatidylserine expressed on the surface of apoptotic cells. Cooperates with ABCA1 within the process of engulfment. Promotes the formation of large intracellular vacuoles and may be responsible for the uptake of amyloid-beta peptides. Necessary for astrocyte-dependent apoptotic neuron clearance in the developing cerebellum. Plays role in muscle cell proliferation, adhesion and motility. Is also an essential factor in the regulation of myogenesis. Controls the balance between skeletal muscle satellite cells proliferation and differentiation through regulation of the notch signaling pathway. May also function in the mosaic spacing of specific neuron subtypes in the retina through homotypic retinal neuron repulsion. Mosaics provide a mechanism to distribute each cell type evenly across the retina, ensuring that all parts of the visual field have access to a full set of processing elements. The polypeptide is Multiple epidermal growth factor-like domains protein 10 (Homo sapiens (Human)).